The chain runs to 1166 residues: Topoisomerase 1-associated factor 1 (1166 aa).

4 disordered regions span residues 333–358, 564–594, 881–981, and 1023–1145; these read KMDE…NNDF, QVRS…ASDD, DPYT…RARL, and ALLT…DENA. Residues 585–594 are compositionally biased toward acidic residues; the sequence is DNNEEHASDD. The span at 881 to 893 shows a compositional bias: basic and acidic residues; sequence DPYTGDIEHDPRQ. The segment covering 916-926 has biased composition (acidic residues); sequence FGSESEGEDVP. Positions 966–981 are enriched in basic and acidic residues; sequence LEARRKARQENTRARL. Residues 1087-1107 show a composition bias toward acidic residues; sequence TEDDENTSATSDEDDEFDFDD. The span at 1109–1142 shows a compositional bias: basic and acidic residues; sequence LAFRRDRDLDRDPVLPSHAEDMQPTDTRELRDND.

Belongs to the timeless family.

It is found in the nucleus. Involved in chromosome segregation during meiosis and DNA damage repair. The polypeptide is Topoisomerase 1-associated factor 1 (tof1) (Aspergillus oryzae (strain ATCC 42149 / RIB 40) (Yellow koji mold)).